Here is a 515-residue protein sequence, read N- to C-terminus: Putative myristoylated protein 118L (515 aa).

Gly-2 is lipidated: N-myristoyl glycine; by host. 3 helical membrane passes run 188 to 208 (LSLA…VGGV), 214 to 234 (IIFP…FQWT), and 482 to 502 (WLLY…AFSS).

This sequence belongs to the IIV-6 118L/458R family.

The protein resides in the membrane. The polypeptide is Putative myristoylated protein 118L (Acheta domesticus (House cricket)).